Here is a 1439-residue protein sequence, read N- to C-terminus: MASSETEIRWAEPGLGKGPQRRRWAWAEDKRDVDRSSSQSWEEERLFPNATSPELLEDFRLAQQHLPPLEWDPHPQPDGHQDSESGETSGEEAEAEDVDSPASSHEPLAWLPQQGRQLDMTEEEPDGTLGSLEVEEAGESSSRLGYEAGLSLEGHGNTSPMALGHGQARGWVASGEQASGDKLSEHSEVNPSVELSPARSWSSGTVSLDHPSDSLDSTWEGETDGPQPTALAETLPEGPSHHLLSPDGRTGGSVARATPMEFQDSSAPPAQSPQHATDRWRRETTRFFCPQPKEHIWKQTKTSPKPLPSRFIGSISPLNPQPRPTRQGRPLPRQGATLAGRSSSNAPKYGRGQLNYPLPDFSKVGPRVRFPKDESYRPPKSRSHNRKPQAPARPLIFKSPAEIVQEVLLSSGEAALAKDTPPAHPITRVPQEFQTPEQATELVHQLQEDYHRLLTKYAEAENTIDQLRLGAKVNLFSDPPQPNHSIHTGMVPQGTKVLSFTIPQPRSAEWWPGPAEDPQASAASGWPSARGDLSPSSLTSMPTLGWLPENRDISEDQSSAEQTQALASQASQFLAKVESFERLIQAGRLMPQDQVKGFQRLKAAHAALEEEYLKACREQHPAQPLAGSKGTPGRFDPRRELEAEIYRLGSCLEELKEHIDQTQQEPEPPGSDSALDSTPALPCLHQPTHLPAPSGQAPMPAIKTSCPEPATTTAAASTGPCPLHVNVEVSSGNSEVEDRPQDPLARLRHKELQMEQVYHGLMERYLSVKSLPEAMRMEEEEEGEEEEEEEGGGDSLEVDGVAATPGKAEATRVLPRQCPVQAEKSHGAPLEEATEKMVSMKPPGFQASLARDGHMSGLGKAEAAPPGPGVPPHPPGTKSAASHQSSMTSLEGSGISERLPQKPLHRGGGPHLEETWMASPETDSGFVGSETSRVSPLTQTPEHRLSHISTAGTLAQPFAASVPRDGASYPKARGSLIPRRATEPSTPRSQAQRYLSSPSGPLRQRAPNFSLERTLAAEMAVPGSEFEGHKRISEQPLPNKTISPPPAPAPAAAPLPCGPTETIPSFLLTRAGRDQAICELQEEVSRLRLRLEDSLHQPLQGSPTRPASAFDRPARTRGRPADSPATWGSHYGSKSTERLPGEPRGEEQIVPPGRQRARSSSVPREVLRLSLSSESELPSLPLFSEKSKTTKDSPQAARDGKRGVGSAGWPDRVTFRGQYTGHEYHVLSPKAVPKGNGTVSCPHCRPIRTQDAGGAVTGDPLGPPPADTLQCPLCGQVGSPPEADGPGSATSGAEKATTRRKASSTPSPKQRSKQAGSSPRPPPGLWYLATAPPAPAPPAFAYISSVPIMPYPPAAVYYAPAGPTSAQPAAKWPPTASPPPARRHRHSIQLDLGDLEELNKALSRAVQAAESVRSTTRQMRSSLSADLRQAHSLRGSCLF.

Composition is skewed to basic and acidic residues over residues 1–10 (MASSETEIRW) and 25–35 (AWAEDKRDVDR). The tract at residues 1–394 (MASSETEIRW…NRKPQAPARP (394 aa)) is disordered. Ser52 is subject to Phosphoserine. Basic and acidic residues predominate over residues 71-83 (WDPHPQPDGHQDS). Residues 89–99 (SGEEAEAEDVD) show a composition bias toward acidic residues. A compositionally biased stretch (polar residues) spans 263-275 (QDSSAPPAQSPQH). Residues 276 to 285 (ATDRWRRETT) show a composition bias toward basic and acidic residues. Phosphoserine is present on residues Ser316, Ser499, and Ser534. Disordered stretches follow at residues 507-562 (SAEW…SAEQ) and 659-682 (IDQT…PALP). The span at 533-544 (LSPSSLTSMPTL) shows a compositional bias: low complexity. 2 positions are modified to phosphoserine: Ser767 and Ser770. The segment at 771 to 804 (LPEAMRMEEEEEGEEEEEEEGGGDSLEVDGVAAT) is PEST. Disordered stretches follow at residues 775-942 (MRME…QTPE) and 977-1005 (IPRR…LRQR). Residues 778–792 (EEEEEGEEEEEEEGG) are compositionally biased toward acidic residues. Ser848 is modified (phosphoserine). Pro residues predominate over residues 865–875 (PPGPGVPPHPP). Composition is skewed to polar residues over residues 879–891 (SAAS…TSLE), 929–940 (SETSRVSPLTQT), and 983–999 (EPST…SSPS). Position 886 is a phosphoserine (Ser886). Residues 911–932 (HLEETWMASPETDSGFVGSETS) form a PEST region. 2 positions are modified to phosphoserine: Ser997 and Ser1010. The segment at 1095–1165 (LHQPLQGSPT…RARSSSVPRE (71 aa)) is disordered. The segment at residues 1115–1123 (RTRGRPADS) is a DNA-binding region (a.T hook). Residues 1135 to 1147 (STERLPGEPRGEE) show a composition bias toward basic and acidic residues. Phosphoserine is present on residues Ser1172 and Ser1173. A disordered region spans residues 1180–1211 (LPLFSEKSKTTKDSPQAARDGKRGVGSAGWPD). Ser1228 bears the Phosphoserine mark. Residues 1252–1329 (AGGAVTGDPL…RPPPGLWYLA (78 aa)) are disordered. A compositionally biased stretch (polar residues) spans 1303 to 1317 (SSTPSPKQRSKQAGS). Phosphoserine is present on residues Ser1377, Ser1387, and Ser1424.

It belongs to the AKNA family. In terms of assembly, interacts with DCTN1. Interacts with MAPRE1/EB1. Interacts with ODF2. Interacts with CAMSAP3. Post-translationally, phosphorylated; phosphorylation regulates dissociation from and reassembly at the centrosome. Predominantly expressed by lymphoid tissues. Highly expressed in the spleen, lymph nodes and peripheral blood leukocytes, expressed at lower level in the thymus. Mainly expressed by germinal center B-lymphocytes, a stage in which receptor and ligand interactions are crucial for B-lymphocyte maturation. Expressed by B- and T-lymphocytes, Natural killer cells and CD1a(+)CD14(-) but not CD1a(-)CD14(+) dendritic cells. Weakly or not expressed in fetal liver and in adult bone marrow.

It is found in the cytoplasm. The protein resides in the cytoskeleton. The protein localises to the microtubule organizing center. Its subcellular location is the centrosome. It localises to the centriole. It is found in the nucleus. Functionally, centrosomal protein that plays a key role in cell delamination by regulating microtubule organization. Required for the delamination and retention of neural stem cells from the subventricular zone during neurogenesis. Also regulates the epithelial-to-mesenchymal transition in other epithelial cells. Acts by increasing centrosomal microtubule nucleation and recruiting nucleation factors and minus-end stabilizers, thereby destabilizing microtubules at the adherens junctions and mediating constriction of the apical endfoot. In addition, may also act as a transcription factor that specifically activates the expression of the CD40 receptor and its ligand CD40L/CD154, two cell surface molecules on lymphocytes that are critical for antigen-dependent-B-cell development. Binds to A/T-rich promoters. It is unclear how it can both act as a microtubule organizer and as a transcription factor; additional evidences are required to reconcile these two apparently contradictory functions. The sequence is that of Microtubule organization protein AKNA from Homo sapiens (Human).